The following is a 390-amino-acid chain: Odorant receptor 85b (390 aa).

The Cytoplasmic segment spans residues 1–30 (MEKLMKYASFFYTAVGIRPYTNGEESKMNK). The helical transmembrane segment at 31–51 (LIFHIVFWSNVINLSFVGLFE) threads the bilayer. The Extracellular portion of the chain corresponds to 52–66 (SIYVYSAFMDNKFLE). Residues 67–87 (AVTALSYIGFVTVGMSKMFFI) form a helical membrane-spanning segment. Residues 88 to 126 (RWKKTAITELINELKEIYPNGLIREERYNLPMYLGTCSR) lie on the Cytoplasmic side of the membrane. The helical transmembrane segment at 127 to 147 (ISLIYSLLYSVLIWTFNLFCV) threads the bilayer. Topologically, residues 148 to 200 (MEYWVYDKWLNIRVVGKQLPYLMYIPWKWQDNWSYYPLLFSQNFAGYTSAAGQ) are extracellular. Asparagine 179 carries an N-linked (GlcNAc...) asparagine glycan. A helical transmembrane segment spans residues 201-221 (ISTDVLLCAVATQLVMHFDFL). Residues 222-260 (SNSMERHELSGDWKKDSRFLVDIVRYHERILRLSDAVND) are Cytoplasmic-facing. Residues 261–281 (IFGIPLLLNFMVSSFVICFVG) form a helical membrane-spanning segment. Residues 282 to 291 (FQMTVGVPPD) lie on the Extracellular side of the membrane. Residues 292–312 (IVVKLFLFLVSSMSQVYLICH) traverse the membrane as a helical segment. The Cytoplasmic segment spans residues 313–360 (YGQLVADASYGFSVATYNQKWYKADVRYKRALVIIIARSQKVTFLKAT). Residues 361 to 381 (IFLDITRSTMTDLLQISYKFF) form a helical membrane-spanning segment. Topologically, residues 382–390 (ALLRTMYTQ) are extracellular.

This sequence belongs to the insect chemoreceptor superfamily. Heteromeric odorant receptor channel (TC 1.A.69) family. Or49a subfamily. As to quaternary structure, interacts with Orco. Complexes exist early in the endomembrane system in olfactory sensory neurons (OSNs), coupling these complexes to the conserved ciliary trafficking pathway. In terms of tissue distribution, expressed in olfactory sensory neurons in the antenna.

It is found in the cell membrane. Its function is as follows. Odorant receptor which mediates acceptance or avoidance behavior, depending on its substrates. The odorant receptor repertoire encodes a large collection of odor stimuli that vary widely in identity, intensity, and duration. Forms a complex with Orco to form odorant-sensing units, providing sensitive and prolonged odorant signaling and calcium permeability. Involved in the behavioral responses to 2-heptanone, amyl acetate, and butyl acetate. The chain is Odorant receptor 85b (Or85b) from Drosophila melanogaster (Fruit fly).